Here is a 916-residue protein sequence, read N- to C-terminus: DNA mismatch repair protein MutS (916 aa).

The segment at 1 to 47 is disordered; sequence MSEALSVPAAEGENTVTASESPDLAATSARAEKVGKQEKPEKAEKQS. Basic and acidic residues predominate over residues 30-45; that stretch reads RAEKVGKQEKPEKAEK. 656 to 663 contributes to the ATP binding site; that stretch reads GPNMGGKS. A compositionally biased stretch (polar residues) spans 843–861; the sequence is ADATPTPQMDLFSAQSSPS. Positions 843–880 are disordered; that stretch reads ADATPTPQMDLFSAQSSPSADDEDDKSAGQSAVPPAQA.

Belongs to the DNA mismatch repair MutS family.

Its function is as follows. This protein is involved in the repair of mismatches in DNA. It is possible that it carries out the mismatch recognition step. This protein has a weak ATPase activity. This is DNA mismatch repair protein MutS from Cupriavidus metallidurans (strain ATCC 43123 / DSM 2839 / NBRC 102507 / CH34) (Ralstonia metallidurans).